Here is a 525-residue protein sequence, read N- to C-terminus: MSWHPQYRSSKFRHVFGKPASKENCYDSVPITRSVHDNHFCAVNPHFIAVVTECAGGGAFLVIPLHQTGKLDPHYPKVCGHRGNVLDVKWNPFDDFEIASCSEDATIKIWSIPKQLLTRNLTAYRKELVGHARRVGLVEWHPTAANILFSAGYDYKVMIWNLDTKESVITSPMSTISCHQDVILSMSFNTNGSLLATTCKDRKIRVIDPRAGTVLQEASYKGHRASKVLFLGNLKKLMSTGTSRWNNRQVALWDQDNLSVPLMEEDLDGSSGVLFPFYDADTSMLYVVGKGDGNIRYYEVSADKPHLSYLTEYRSYNPQKGIGVMPKRGLDVSSCEIFRFYKLITTKSLIEPISMIVPRRSESYQEDIYPPTAGAQPSLTAQEWLSGMNRDPILVSLRPGSELLRPHPLPAERPIFNSMAPASPRLLNQTEKLAAEDGWRSSSLLEEKMPRWAAEHRLEEKKTWLTNGFDVFECPPPKTENELLQMFYRQQEEIRRLRELLTQREVQAKQLELEIKNLRMGSEQL.

WD repeat units lie at residues 24-71, 72-122, 123-170, 171-214, 215-259, 260-305, and 306-342; these read NCYD…TGKL, DPHY…RNLT, AYRK…SVIT, SPMS…AGTV, LQEA…DNLS, VPLM…ADKP, and HLSY…RFYK. Positions 485 to 524 form a coiled coil; it reads QMFYRQQEEIRRLRELLTQREVQAKQLELEIKNLRMGSEQ.

It belongs to the WD repeat coronin family. As to quaternary structure, binds actin. Component of the N-Cor repressor complex, at least composed of NCOR1, NCOR2, HDAC3, TBL1X, TBL1R, CORO2A and GPS2.

This Homo sapiens (Human) protein is Coronin-2A (CORO2A).